An 846-amino-acid polypeptide reads, in one-letter code: Pseudolaratriene synthase, chloroplastic (846 aa).

Residues 1 to 58 (MSRFTSATHGLNLSIKMPISVSQVPSIRSNTSKYELQKLRSTGRSVLQTRRQLAIINM) constitute a chloroplast transit peptide. 3 residues coordinate Mg(2+): Asp-595, Asp-599, and Asp-747. Positions 595–599 (DDIYD) match the DDXXD motif motif.

It belongs to the terpene synthase family. It depends on Mg(2+) as a cofactor. Expressed in young and mature roots. Expressed at low levels in barks.

The protein resides in the plastid. It is found in the chloroplast. It carries out the reaction (2E,6E,10E)-geranylgeranyl diphosphate = pseudolaratriene + diphosphate. It functions in the pathway terpene metabolism. In terms of biological role, converts geranylgeranyl diphosphate to an new 5,7-fused bicyclic diterpene, named pseudolaratriene. Catalyzes the first committed step in pseudolaric acid B (PAB) biosynthesis. PAB exhibits antiproliferative activity by inhibiting microtubule polymerization, and has demonstrated antitumor properties against several cancer types. This chain is Pseudolaratriene synthase, chloroplastic, found in Pseudolarix amabilis (Golden larch).